The following is a 147-amino-acid chain: Acireductone dioxygenase (147 aa).

Fe(2+) contacts are provided by His-74, His-76, Glu-80, and His-119. Ni(2+) contacts are provided by His-74, His-76, Glu-80, and His-119.

Belongs to the acireductone dioxygenase (ARD) family. Fe(2+) serves as cofactor. Requires Ni(2+) as cofactor.

The protein resides in the cytoplasm. The protein localises to the nucleus. It carries out the reaction 1,2-dihydroxy-5-(methylsulfanyl)pent-1-en-3-one + O2 = 4-methylsulfanyl-2-oxobutanoate + formate + 2 H(+). The enzyme catalyses 1,2-dihydroxy-5-(methylsulfanyl)pent-1-en-3-one + O2 = 3-(methylsulfanyl)propanoate + CO + formate + 2 H(+). The protein operates within amino-acid biosynthesis; L-methionine biosynthesis via salvage pathway; L-methionine from S-methyl-5-thio-alpha-D-ribose 1-phosphate: step 5/6. Its function is as follows. Catalyzes 2 different reactions between oxygen and the acireductone 1,2-dihydroxy-3-keto-5-methylthiopentene (DHK-MTPene) depending upon the metal bound in the active site. Fe-containing acireductone dioxygenase (Fe-ARD) produces formate and 2-keto-4-methylthiobutyrate (KMTB), the alpha-ketoacid precursor of methionine in the methionine recycle pathway. Ni-containing acireductone dioxygenase (Ni-ARD) produces methylthiopropionate, carbon monoxide and formate, and does not lie on the methionine recycle pathway. The protein is Acireductone dioxygenase (adi1) of Dictyostelium discoideum (Social amoeba).